A 453-amino-acid polypeptide reads, in one-letter code: Cytochrome b-c1 complex subunit 2, mitochondrial (453 aa).

A mitochondrion-targeting transit peptide spans M1–Y14. 3 positions are modified to N6-acetyllysine: K66, K199, and K250. At S368 the chain carries Phosphoserine.

This sequence belongs to the peptidase M16 family. UQCRC2/QCR2 subfamily. In terms of assembly, component of the ubiquinol-cytochrome c oxidoreductase (cytochrome b-c1 complex, complex III, CIII), a multisubunit enzyme composed of 11 subunits. The complex is composed of 3 respiratory subunits cytochrome b, cytochrome c1 and Rieske protein UQCRFS1, 2 core protein subunits UQCRC1/QCR1 and UQCRC2/QCR2, and 6 low-molecular weight protein subunits UQCRH/QCR6, UQCRB/QCR7, UQCRQ/QCR8, UQCR10/QCR9, UQCR11/QCR10 and subunit 9, the cleavage product of Rieske protein UQCRFS1. The complex exists as an obligatory dimer and forms supercomplexes (SCs) in the inner mitochondrial membrane with NADH-ubiquinone oxidoreductase (complex I, CI) and cytochrome c oxidase (complex IV, CIV), resulting in different assemblies (supercomplex SCI(1)III(2)IV(1) and megacomplex MCI(2)III(2)IV(2)). Interacts with RAB5IF. Interacts with STMP1. Acetylation of Lys-159 and Lys-250 is observed in liver mitochondria from fasted mice but not from fed mice. Expressed in neurons and astrocytes of the cerebral cortex and hippocampus (at protein level).

Its subcellular location is the mitochondrion inner membrane. Its function is as follows. Component of the ubiquinol-cytochrome c oxidoreductase, a multisubunit transmembrane complex that is part of the mitochondrial electron transport chain which drives oxidative phosphorylation. The respiratory chain contains 3 multisubunit complexes succinate dehydrogenase (complex II, CII), ubiquinol-cytochrome c oxidoreductase (cytochrome b-c1 complex, complex III, CIII) and cytochrome c oxidase (complex IV, CIV), that cooperate to transfer electrons derived from NADH and succinate to molecular oxygen, creating an electrochemical gradient over the inner membrane that drives transmembrane transport and the ATP synthase. The cytochrome b-c1 complex catalyzes electron transfer from ubiquinol to cytochrome c, linking this redox reaction to translocation of protons across the mitochondrial inner membrane, with protons being carried across the membrane as hydrogens on the quinol. In the process called Q cycle, 2 protons are consumed from the matrix, 4 protons are released into the intermembrane space and 2 electrons are passed to cytochrome c. The 2 core subunits UQCRC1/QCR1 and UQCRC2/QCR2 are homologous to the 2 mitochondrial-processing peptidase (MPP) subunits beta-MPP and alpha-MPP respectively, and they seem to have preserved their MPP processing properties. May be involved in the in situ processing of UQCRFS1 into the mature Rieske protein and its mitochondrial targeting sequence (MTS)/subunit 9 when incorporated into complex III. The sequence is that of Cytochrome b-c1 complex subunit 2, mitochondrial (Uqcrc2) from Mus musculus (Mouse).